The primary structure comprises 543 residues: Chaperonin GroEL 2 (543 aa).

ATP contacts are provided by residues 29-32, 86-90, Gly-413, 479-481, and Asp-495; these read TLGP, DGTTT, and NAA.

This sequence belongs to the chaperonin (HSP60) family. In terms of assembly, forms a cylinder of 14 subunits composed of two heptameric rings stacked back-to-back. Interacts with the co-chaperonin GroES.

It is found in the cytoplasm. The enzyme catalyses ATP + H2O + a folded polypeptide = ADP + phosphate + an unfolded polypeptide.. Together with its co-chaperonin GroES, plays an essential role in assisting protein folding. The GroEL-GroES system forms a nano-cage that allows encapsulation of the non-native substrate proteins and provides a physical environment optimized to promote and accelerate protein folding. The chain is Chaperonin GroEL 2 from Prochlorococcus marinus (strain NATL1A).